A 7182-amino-acid chain; its full sequence is Replicase polyprotein 1ab (7182 aa).

The 121-residue stretch at 54 to 174 (YDNHVKIDCR…HKWFQFCRLY (121 aa)) folds into the CoV Nsp1 globular domain. Residues 192–222 (FSVEDAYAEVHAEPKGKYSQKAYALLRQYRG) form the BetaCoV Nsp1 C-terminal domain. Residues 226–488 (VLFVDQYGCD…LITHALYLDY (263 aa)) enclose the CoV Nsp2 N-terminal domain. Residues Cys-365, Cys-370, Cys-386, and Cys-389 each coordinate Zn(2+). A C4 region spans residues 365–389 (CFNDNCDFYGWVSGNMMDGFSCPLC). The CoV Nsp2 middle domain maps to 493-681 (CGNLEQNHIL…VNKFYTFFKL (189 aa)). The CoV Nsp2 C-terminal domain occupies 697 to 809 (LKTINGLVCI…LDQAWRFPCA (113 aa)). The Ubiquitin-like 1 domain occupies 811–923 (RKVNFNEKPV…MYCTFAIEDV (113 aa)). A run of 14 repeats spans residues 945-954 (NDDEDVVTGD), 955-964 (NDDEDVVTGD), 965-974 (NDDEDVVTGD), 975-984 (NDDEDVVTGD), 985-994 (NDDEDVVTGD), 995-1004 (NDDEDVVTGD), 1005-1014 (NDDEDVVTGD), 1015-1024 (NDDEDVVTGD), 1025-1034 (NDDEDVVTGD), 1035-1044 (NDDEDVVTGD), 1045-1054 (NDDEDVVTGD), 1055-1064 (NDDEDVVTGD), 1065-1074 (NDDEDVVTGD), and 1075-1084 (NDDEDVVTGD). A 14 X 10 AA tandem repeat of N-[DN]-D-E-D-V-V-T-G-D region spans residues 945 to 1084 (NDDEDVVTGD…NDDEDVVTGD (140 aa)). Residues 946-1064 (DDEDVVTGDN…NDDEDVVTGD (119 aa)) form a disordered region. A Peptidase C16 1 domain is found at 1123-1373 (VFNDVYNDAL…VCFVKGDIIN (251 aa)). Cys-1161 (for PL1-PRO activity) is an active-site residue. Zn(2+)-binding residues include Cys-1238, Cys-1241, Cys-1264, and Cys-1266. The C4-type 1 zinc-finger motif lies at 1238-1266 (CLKCGFSFDLNGLDALFFYGDIVSHVCKC). Residues His-1312 and Asp-1323 each act as for PL1-PRO activity in the active site. Residues 1351 to 1522 (ELPQLYGLCI…IIQKCQITSV (172 aa)) form the Macro domain. One can recognise a DPUP domain in the interval 1578 to 1649 (NDVRDYLLSK…TVNQVCVLLA (72 aa)). The 56-residue stretch at 1649–1704 (AKKIDVLLTVDGVNFKSISLTVGEVFGKILGNVFCDGIDVTKLKCSDFYADKILYQ) folds into the Ubiquitin-like 2 domain. Residues 1718-1978 (SSFGFDQQQL…MVAYNPDLSQ (261 aa)) enclose the Peptidase C16 2 domain. The For PL2-PRO activity role is filled by Cys-1757. Zn(2+)-binding residues include Cys-1835, Cys-1837, Cys-1869, and Cys-1871. The C4-type 2 zinc finger occupies 1835–1871 (CDCGIKQESRVGVDAVMHFGTLAKTDLFNGYKIGCNC). Residues His-1914 and Asp-1928 each act as for PL2-PRO activity in the active site. Residues 1992 to 2093 (IKAQFKPFAK…TYFNKPSFKS (102 aa)) form the Nucleic acid-binding domain. One can recognise a G2M domain in the interval 2108–2257 (ESQGNVVTSV…NDKTIFYTTE (150 aa)). The next 3 membrane-spanning stretches (helical) occupy residues 2226 to 2246 (AIEF…LLHF), 2287 to 2307 (FLVV…NVIF), and 2318 to 2338 (FPIF…LVTI). Residues 2226-2463 (AIEFYGFLKW…FVLLRFYIVV (238 aa)) are HD1. The 62-residue stretch at 2323-2384 (GRIVMWIKAT…AIDFVQYEVD (62 aa)) folds into the 3Ecto domain. 2 cysteine pairs are disulfide-bonded: Cys-2339/Cys-2363 and Cys-2354/Cys-2360. 2 helical membrane-spanning segments follow: residues 2401 to 2421 (LVIG…LIGL) and 2443 to 2463 (FIVF…YIVV). The tract at residues 2471–2561 (GFIRHIVYGC…ELKRPVNPTD (91 aa)) is Y1. The CoV Nsp3 Y domain maps to 2471–2838 (GFIRHIVYGC…LTTPFSLKGG (368 aa)). 8 residues coordinate Zn(2+): His-2475, Cys-2480, Cys-2485, Cys-2488, Cys-2521, His-2524, Cys-2528, and Cys-2531. The interval 2475–2488 (HIVYGCNKAGCLFC) is ZF1. The interval 2521–2531 (CVKHQWNCFNC) is ZF2. Positions 2562–2654 (ASHYVVTDIK…LVDKKLITTA (93 aa)) are Y2. The interval 2562-2838 (ASHYVVTDIK…LTTPFSLKGG (277 aa)) is coV-Y. The tract at residues 2655–2737 (CNGISVTQTM…KSMISAVAAG (83 aa)) is Y3. Residues 2738–2838 (LEFTDENYNN…LTTPFSLKGG (101 aa)) are Y4. 5 helical membrane-spanning segments follow: residues 2844-2864 (LLYI…ALLP), 3119-3139 (ASSI…YYLI), 3151-3171 (VVVI…VFQV), 3178-3198 (VYAC…SVIM), and 3203-3223 (IVMY…AMVI). The tract at residues 2844 to 3223 (LLYILFFVSL…FCVTYVAMVI (380 aa)) is HD2. The Nsp4C domain maps to 3237-3334 (IGVNVCSDST…TASVSTSFLQ (98 aa)). Residues 3335-3637 (SGIVKMVSPT…YQQLAGVKLQ (303 aa)) enclose the Peptidase C30 domain. Residues His-3375 and Cys-3479 each act as for 3CL-PRO activity in the active site. A run of 7 helical transmembrane segments spans residues 3651–3671 (ILIS…WTIF), 3676–3696 (THMI…MLLV), 3701–3721 (FYLT…NYLV), 3744–3764 (FTYV…IFIT), 3772–3792 (IFSL…WYFG), 3800–3820 (LLFI…SLAI), and 3843–3863 (LILL…GFFS). The tract at residues 3651–3863 (ILISTFLFSC…ILSCYWGFFS (213 aa)) is HD3. Residues 3925 to 4013 (SKLTDVKCAN…DYVQDSTVLQ (89 aa)) form the RdRp Nsp7 cofactor domain. Positions 4014 to 4210 (ALQSEFVNMA…YNEVANAVMQ (197 aa)) constitute a RdRp Nsp8 cofactor domain. One can recognise a Nsp9 ssRNA-binding domain in the interval 4211 to 4320 (NNELMPHKLK…GTLSSTIRLQ (110 aa)). Residues 4321–4458 (AGVATEYAAN…CVGSSVAVQS (138 aa)) enclose the ExoN/MTase coactivator domain. Zn(2+) contacts are provided by Cys-4394, Cys-4397, His-4403, Cys-4410, Cys-4436, Cys-4439, Cys-4447, and Cys-4449. 2 zinc fingers span residues 4394–4410 (CIYC…DGIC) and 4436–4449 (CQVC…SCSC). The region spanning 4463-4718 (FLNRVRGTSV…DCELFVNDSY (256 aa)) is the NiRAN domain. Mn(2+) is bound by residues Asn-4666 and Asp-4675. The region spanning 4719-4817 (RQFDLVQYDF…MNLDVDTHRY (99 aa)) is the Nsp12 Interface domain. The Zn(2+) site is built by His-4748, Cys-4754, Cys-4759, Cys-4763, and Cys-4940. The Nsp12 RNA-dependent RNA polymerase domain maps to 4818-5385 (RLSLKDLLLY…NMYLKSAVMQ (568 aa)). Residues 4820–5034 (SLKDLLLYAA…HQKCLKSIAA (215 aa)) form a rdRp Fingers N-ter region. A rdRp Palm N-ter region spans residues 5035–5073 (TRGVPVVIGTTKFYGGWDDMLRHLIKDVDNPVLMGWDYP). The RdRp catalytic domain occupies 5065-5227 (PVLMGWDYPK…CYNSDYASKG (163 aa)). The rdRp Fingers C-ter stretch occupies residues 5074–5132 (KCDRAMPNILRIVSSLVLARKHEFCCSHGDRFYRLANECAQVLSEIVMCGGCYYVKPGG). The Zn(2+) site is built by His-5095, Cys-5098, and Cys-5099. The tract at residues 5133–5268 (TSSGDATTAF…TNGPHEFCSQ (136 aa)) is rdRp Palm C-ter. Catalysis depends on residues Ser-5212, Asp-5213, and Asp-5214. The tract at residues 5269 to 5385 (HTMLVKIDGD…NMYLKSAVMQ (117 aa)) is rdRp Thumb. Positions 5386–5498 (SVGACVVCSS…DDFNKIASCK (113 aa)) constitute a CV ZBD domain. Zn(2+)-binding residues include Cys-5390, Cys-5393, Cys-5401, Cys-5404, Cys-5411, Cys-5414, His-5418, His-5424, Cys-5435, Cys-5440, Cys-5457, and His-5460. The (+)RNA virus helicase ATP-binding domain occupies 5641–5822 (SVPLVFQNNV…MCCLGPDIFL (182 aa)). Position 5666–5673 (5666–5673 (GPPGTGKS)) interacts with ATP. In terms of domain architecture, (+)RNA virus helicase C-terminal spans 5823-5992 (GNCYRCPKEI…TLPRLHCTTN (170 aa)). An ExoN domain is found at 6059–6274 (LFITKDEAIK…RCLAIYDCFC (216 aa)). Catalysis depends on residues Asp-6077, Glu-6079, and Glu-6178. The Zn(2+) site is built by Cys-6194, Cys-6197, Cys-6213, His-6216, His-6244, Cys-6248, and His-6251. Catalysis depends on residues His-6255 and Asp-6260. Cys-6266 contributes to the Zn(2+) binding site. In terms of domain architecture, N7-MTase spans 6283-6509 (YPIISNEVSI…NLWNTFTTLQ (227 aa)). 6318 to 6324 (DIGNPKG) lines the S-adenosyl-L-methionine pocket. The interval 6396–6410 (CNGGSLYVNKHAFHT) is gpppA-binding. Cys-6434, Cys-6455, Cys-6466, and His-6469 together coordinate Zn(2+). Residues 6510–6570 (SLENVIYNLV…NIAVELFTKR (61 aa)) enclose the Nsp15 N-terminal oligomerization domain. Residues 6571–6691 (SIRHHPELKI…FAMRKDGDDV (121 aa)) enclose the AV-Nsp11N/CoV-Nsp15M domain. A NendoU domain is found at 6741-6880 (EPRSDLERDF…NDNKIMTFYP (140 aa)). Active-site residues include His-6771, His-6786, Lys-6826, Lys-6929, Asp-7013, Lys-7053, and Glu-7086. The 295-residue stretch at 6885 to 7179 (TNDWKPGYSM…KEIFVGDSLV (295 aa)) folds into the Nidovirus-type SAM-dependent 2'-O-MTase domain.

Belongs to the coronaviruses polyprotein 1ab family. In terms of assembly, interacts with host PHB and PHB2. As to quaternary structure, interacts with papain-like protease nsp3 and non-structural protein 6. Monomer. Homodimer. Only the homodimer shows catalytic activity. In terms of assembly, interacts with nsp8 and nsp12 to form the replication-transcription complex (RTC): nsp12, nsp7, two subunits of nsp8, and up to two subunits of nsp13. As to quaternary structure, interacts with nsp7, nsp13 and nsp12 to form the replication-transcription complex (RTC): nsp12, nsp7, two subunits of nsp8, and up to two subunits of nsp13. Interacts with nsp12. In terms of assembly, interacts with proofreading exoribonuclease nsp14 and 2'-O-methyltransferase nsp16; these interactions enhance nsp14 and nsp16 enzymatic activities. As to quaternary structure, interacts with nsp7 and nsp8 to form the replication-transcription complex (RTC): nsp12, nsp7, two subunits of nsp8, and up to two subunits of nsp13. Interacts with nsp9. Interacts with nsp8 to form the replication-transcription complex (RTC): nsp12, nsp7, two subunits of nsp8, and up to two subunits of nsp13. It depends on Mn(2+) as a cofactor. The cofactor is Mg(2+). Post-translationally, specific enzymatic cleavages in vivo by its own proteases yield mature proteins. 3CL-PRO and PL-PRO proteinases are autocatalytically processed.

It is found in the host membrane. It localises to the host cytoplasm. The protein resides in the host perinuclear region. The protein localises to the host endoplasmic reticulum-Golgi intermediate compartment. The catalysed reaction is RNA(n) + a ribonucleoside 5'-triphosphate = RNA(n+1) + diphosphate. The enzyme catalyses ATP + H2O = ADP + phosphate + H(+). It carries out the reaction Thiol-dependent hydrolysis of ester, thioester, amide, peptide and isopeptide bonds formed by the C-terminal Gly of ubiquitin (a 76-residue protein attached to proteins as an intracellular targeting signal).. It catalyses the reaction a 5'-end (N(7)-methyl 5'-triphosphoguanosine)-ribonucleoside in mRNA + S-adenosyl-L-methionine = a 5'-end (N(7)-methyl 5'-triphosphoguanosine)-(2'-O-methyl-ribonucleoside) in mRNA + S-adenosyl-L-homocysteine + H(+). The catalysed reaction is uridylyl-uridylyl-ribonucleotide-RNA = a 3'-end uridylyl-2',3'-cyclophospho-uridine-RNA + a 5'-end dephospho-ribonucleoside-RNA. The enzyme catalyses a 5'-end diphospho-ribonucleoside in mRNA + GTP + H(+) = a 5'-end (5'-triphosphoguanosine)-ribonucleoside in mRNA + diphosphate. It carries out the reaction a 5'-end (5'-triphosphoguanosine)-ribonucleoside in mRNA + S-adenosyl-L-methionine = a 5'-end (N(7)-methyl 5'-triphosphoguanosine)-ribonucleoside in mRNA + S-adenosyl-L-homocysteine. Functionally, the replicase polyprotein of coronaviruses is a multifunctional protein: it contains the activities necessary for the transcription of negative stranded RNA, leader RNA, subgenomic mRNAs and progeny virion RNA as well as proteinases responsible for the cleavage of the polyprotein into functional products. In terms of biological role, inhibits host translation by interacting with the 40S ribosomal subunit. The nsp1-40S ribosome complex further induces an endonucleolytic cleavage near the 5'UTR of host mRNAs, targeting them for degradation. Viral mRNAs are not susceptible to nsp1-mediated endonucleolytic RNA cleavage thanks to the presence of a 5'-end leader sequence and are therefore protected from degradation. By suppressing host gene expression, nsp1 facilitates efficient viral gene expression in infected cells and evasion from host immune response. May play a role in the modulation of host cell survival signaling pathway by interacting with host PHB and PHB2. Indeed, these two proteins play a role in maintaining the functional integrity of the mitochondria and protecting cells from various stresses. Its function is as follows. Responsible for the cleavages located at the N-terminus of the replicase polyprotein. In addition, PL-PRO possesses a deubiquitinating/deISGylating activity and processes both 'Lys-48'- and 'Lys-63'-linked polyubiquitin chains from cellular substrates. Participates together with nsp4 in the assembly of virally-induced cytoplasmic double-membrane vesicles necessary for viral replication. Antagonizes innate immune induction of type I interferon by blocking the phosphorylation, dimerization and subsequent nuclear translocation of host IRF3. Also prevents host NF-kappa-B signaling. Functionally, participates in the assembly of virally-induced cytoplasmic double-membrane vesicles necessary for viral replication. In terms of biological role, cleaves the C-terminus of replicase polyprotein at 11 sites. Recognizes substrates containing the core sequence [ILMVF]-Q-|-[SGACN]. Also able to bind an ADP-ribose-1''-phosphate (ADRP). Plays a role in the initial induction of autophagosomes from host endoplasmic reticulum. Later, limits the expansion of these phagosomes that are no longer able to deliver viral components to lysosomes. Its function is as follows. Forms a hexadecamer with nsp8 (8 subunits of each) that may participate in viral replication by acting as a primase. Alternatively, may synthesize substantially longer products than oligonucleotide primers. Functionally, forms a hexadecamer with nsp7 (8 subunits of each) that may participate in viral replication by acting as a primase. Alternatively, may synthesize substantially longer products than oligonucleotide primers. In terms of biological role, forms a primer, NSP9-pU, which is utilized by the polymerase for the initiation of RNA chains. Interacts with ribosome signal recognition particle RNA (SRP). Together with NSP8, suppress protein integration into the cell membrane, thereby disrupting host immune defenses. Plays a pivotal role in viral transcription by stimulating both nsp14 3'-5' exoribonuclease and nsp16 2'-O-methyltransferase activities. Therefore plays an essential role in viral mRNAs cap methylation. Its function is as follows. RNA-directed RNA polymerase that catalyzes the transcription of viral genomic and subgenomic RNAs. Acts in complex with nsp7 and nsp8 to transcribe both the minus and positive strands of genomic RNA. The kinase-like NiRAN domain of NSP12 attaches one or more nucleotides to the amino terminus of NSP9, forming a covalent RNA-protein intermediate that serves as transcription/replication primer. Subgenomic RNAs (sgRNAs) are formed by discontinuous transcription: The polymerase has the ability to pause at transcription-regulating sequences (TRS) and jump to the leader TRS, resulting in a major deletion. This creates a series of subgenomic RNAs that are replicated, transcribed and translated. In addition, Nsp12 is a subunit of the viral RNA capping enzyme that catalyzes the RNA guanylyltransferase reaction for genomic and sub-genomic RNAs. Subsequently, the NiRAN domain transfers RNA to GDP, and forms the core cap structure GpppA-RNA. Functionally, multi-functional protein with a zinc-binding domain in N-terminus displaying RNA and DNA duplex-unwinding activities with 5' to 3' polarity. Activity of helicase is dependent on magnesium. In terms of biological role, plays a role in viral RNA synthesis through two distinct activities. The N7-guanine methyltransferase activity plays a role in the formation of the cap structure GpppA-RNA. The proofreading exoribonuclease reduces the sensitivity of the virus to RNA mutagens during replication. This activity acts on both ssRNA and dsRNA in a 3'-5' direction. Plays a role in viral transcription/replication and prevents the simultaneous activation of host cell dsRNA sensors, such as MDA5/IFIH1, OAS, and PKR. Acts by degrading the 5'-polyuridines generated during replication of the poly(A) region of viral genomic and subgenomic RNAs. Catalyzes a two-step reaction in which a 2'3'-cyclic phosphate (2'3'-cP) is first generated by 2'-O transesterification, which is then hydrolyzed to a 3'-phosphate (3'-P). If not degraded, poly(U) RNA would hybridize with poly(A) RNA tails and activate host dsRNA sensors. Its function is as follows. Methyltransferase that mediates mRNA cap 2'-O-ribose methylation to the 5'-cap structure of viral mRNAs. N7-methyl guanosine cap is a prerequisite for binding of nsp16. Therefore plays an essential role in viral mRNAs cap methylation which is essential to evade immune system. This Human coronavirus HKU1 (isolate N1) (HCoV-HKU1) protein is Replicase polyprotein 1ab (rep).